The sequence spans 911 residues: DNA mismatch repair protein MutS (911 aa).

Residues 1–10 are compositionally biased toward basic and acidic residues; it reads MDNKTDHKND. The segment at 1–24 is disordered; that stretch reads MDNKTDHKNDLNSQPVPSSAPHKE. 662–669 contacts ATP; sequence GPNMGGKS.

It belongs to the DNA mismatch repair MutS family.

Its function is as follows. This protein is involved in the repair of mismatches in DNA. It is possible that it carries out the mismatch recognition step. This protein has a weak ATPase activity. The protein is DNA mismatch repair protein MutS of Bartonella quintana (strain Toulouse) (Rochalimaea quintana).